The following is a 660-amino-acid chain: DNA mismatch repair protein MutL (660 aa).

The interval 408–436 is disordered; sequence DQTSASASVKHASRSQDENQLSEHPNLDF. Residues 425–436 show a composition bias toward polar residues; sequence ENQLSEHPNLDF.

The protein belongs to the DNA mismatch repair MutL/HexB family.

This protein is involved in the repair of mismatches in DNA. It is required for dam-dependent methyl-directed DNA mismatch repair. May act as a 'molecular matchmaker', a protein that promotes the formation of a stable complex between two or more DNA-binding proteins in an ATP-dependent manner without itself being part of a final effector complex. The polypeptide is DNA mismatch repair protein MutL (Streptococcus uberis (strain ATCC BAA-854 / 0140J)).